The chain runs to 624 residues: Cilia- and flagella-associated protein 206 (624 aa).

This sequence belongs to the CFAP206 family.

The protein resides in the cytoplasm. It localises to the cytoskeleton. Its subcellular location is the cilium axoneme. The protein localises to the cilium basal body. Essential for sperm motility and is involved in the regulation of the beating frequency of motile cilia on the epithelial cells of the respiratory tract. Required for the establishment of radial spokes in sperm flagella. This is Cilia- and flagella-associated protein 206 (cfap206) from Danio rerio (Zebrafish).